A 386-amino-acid polypeptide reads, in one-letter code: MATAQMHRNKVNSVALPSRVATETQSLILVKRLLAVSVSCITYLRGLFPEYAYGTRYLDDICVKILREDKSCPGSTQLVKWMLGCYDALQKKYLRMVMLAIYTDPEDPQTVTECYQFKFKYTASGPVMDFVSNNSNSVSTCSDAKKTSILLIRKLYILMQNLGPLPNDVCLTMKLFYYDEVTPADYQPPGFKEGTCEGLMFEGEPMYLNVGEVATPFHVLKVKVTTEKERMENIEKSIFKKQASKQPQTDEEKPDLSINDDLAQDNNGDRKRDDIETLKVEDLNLTCQEDGNLQSDDSQNSALADSQEKTSQAAPPAFGRKTRSGRIFQKPDLELKNQKESARASKGNQQARKPEKRSQSFEITGSQEDPAVAKRRKFSEPRTPLN.

An HORMA domain is found at 24-224 (TQSLILVKRL…TPFHVLKVKV (201 aa)). Disordered regions lie at residues 237 to 274 (SIFK…KRDD) and 289 to 386 (EDGN…TPLN). The segment covering 289-313 (EDGNLQSDDSQNSALADSQEKTSQA) has biased composition (polar residues). The span at 329 to 343 (QKPDLELKNQKESAR) shows a compositional bias: basic and acidic residues.

The protein localises to the nucleus. It is found in the chromosome. In terms of biological role, plays a key role in meiotic progression by ensuring that sufficient numbers of processed DNA double-strand breaks (DSBs) are available for successful homology search, promoting synaptonemal-complex formation independently and playing key role in the male mid-pachytene checkpoint and the female meiotic prophase checkpoint. In Xenopus laevis (African clawed frog), this protein is HORMA domain-containing protein 1 (hormad1).